The sequence spans 308 residues: MIRHLLSGADVDAGTANRILDTAAEMATVAGREVKKLPALRGRTVVNLFYEDSTRTRISFEAAAKRLSADVINFSAKGSSVTKGESLKDTALTLQAMGADAVVVRHPASGAPHRLAEWVDGSVVNAGDGTHEHPTQALLDAYTMRSRLGRLAGLSVAVVGDVLHSRVARSNVLLLSTLGAKVTLVGPPPLIPVDIVAALAPGTAVCYDLDAVLPQSDVVMMLRVQRERMNDSYFPSAREYARRYGLDGTRMRRLPEHAIVMHPGPMNRGMEITPEVADSPRSTIVEQVANGVSVRMAVLYLLLGGNNR.

2 residues coordinate carbamoyl phosphate: Arg55 and Thr56. An L-aspartate-binding site is contributed by Lys83. Carbamoyl phosphate is bound by residues Arg105, His133, and Gln136. Residues Arg166 and Arg223 each contribute to the L-aspartate site. Positions 264 and 265 each coordinate carbamoyl phosphate.

This sequence belongs to the aspartate/ornithine carbamoyltransferase superfamily. ATCase family. In terms of assembly, heterododecamer (2C3:3R2) of six catalytic PyrB chains organized as two trimers (C3), and six regulatory PyrI chains organized as three dimers (R2).

It catalyses the reaction carbamoyl phosphate + L-aspartate = N-carbamoyl-L-aspartate + phosphate + H(+). Its pathway is pyrimidine metabolism; UMP biosynthesis via de novo pathway; (S)-dihydroorotate from bicarbonate: step 2/3. Its function is as follows. Catalyzes the condensation of carbamoyl phosphate and aspartate to form carbamoyl aspartate and inorganic phosphate, the committed step in the de novo pyrimidine nucleotide biosynthesis pathway. The chain is Aspartate carbamoyltransferase catalytic subunit from Salinispora arenicola (strain CNS-205).